Consider the following 90-residue polypeptide: Putative membrane protein insertion efficiency factor (90 aa).

This sequence belongs to the UPF0161 family.

Its subcellular location is the cell membrane. In terms of biological role, could be involved in insertion of integral membrane proteins into the membrane. The chain is Putative membrane protein insertion efficiency factor from Lactococcus lactis subsp. cremoris (strain SK11).